Reading from the N-terminus, the 441-residue chain is Chitinase-like protein Idgf3 (441 aa).

A signal peptide spans 1-23 (MTGSLWLSLALSLAVLAQFKVSA). The 417-residue stretch at 25-441 (PNLVCFYDSQ…MLRAIKYRLL (417 aa)) folds into the GH18 domain. The cysteines at positions 29 and 56 are disulfide-linked. N-linked (GlcNAc...) asparagine glycosylation is present at Asn221. The segment at 307–331 (KDSGDSGMPVVPSTQGPAPAGPQSK) is disordered. Residues Cys342 and Cys425 are joined by a disulfide bond.

This sequence belongs to the glycosyl hydrolase 18 family. IDGF subfamily. Glycosylated. As to expression, primarily expressed in yolk cells and fat body. In larvae, it is expressed in small and large salivary gland cells, and weakly expressed in imaginal disks. Less expressed than Idgf2 and Idgf4.

The protein resides in the secreted. In terms of biological role, cooperates with insulin-like peptides to stimulate the proliferation, polarization and motility of imaginal disk cells. May act by stabilizing the binding of insulin-like peptides to its receptor through a simultaneous interaction with both molecules to form a multiprotein signaling complex. The protein is Chitinase-like protein Idgf3 (Idgf3) of Drosophila melanogaster (Fruit fly).